We begin with the raw amino-acid sequence, 357 residues long: Peptide chain release factor 1 (357 aa).

Q233 carries the N5-methylglutamine modification.

The protein belongs to the prokaryotic/mitochondrial release factor family. Post-translationally, methylated by PrmC. Methylation increases the termination efficiency of RF1.

It is found in the cytoplasm. Its function is as follows. Peptide chain release factor 1 directs the termination of translation in response to the peptide chain termination codons UAG and UAA. This is Peptide chain release factor 1 from Leuconostoc citreum (strain KM20).